Consider the following 384-residue polypeptide: S-adenosylmethionine synthase (384 aa).

Residue His-15 coordinates ATP. Residue Asp-17 participates in Mg(2+) binding. Glu-43 lines the K(+) pocket. L-methionine contacts are provided by Glu-56 and Gln-99. The flexible loop stretch occupies residues 99 to 109 (QSPDINQGVDR). Residues 164–166 (DAK), 230–231 (RF), Asp-239, 245–246 (RK), Ala-262, and Lys-266 contribute to the ATP site. Asp-239 contacts L-methionine. Residue Lys-270 participates in L-methionine binding.

This sequence belongs to the AdoMet synthase family. As to quaternary structure, homotetramer; dimer of dimers. Mg(2+) is required as a cofactor. It depends on K(+) as a cofactor.

The protein resides in the cytoplasm. The catalysed reaction is L-methionine + ATP + H2O = S-adenosyl-L-methionine + phosphate + diphosphate. It functions in the pathway amino-acid biosynthesis; S-adenosyl-L-methionine biosynthesis; S-adenosyl-L-methionine from L-methionine: step 1/1. Its function is as follows. Catalyzes the formation of S-adenosylmethionine (AdoMet) from methionine and ATP. The overall synthetic reaction is composed of two sequential steps, AdoMet formation and the subsequent tripolyphosphate hydrolysis which occurs prior to release of AdoMet from the enzyme. This Escherichia coli (strain K12 / DH10B) protein is S-adenosylmethionine synthase.